The chain runs to 373 residues: Zinc finger CCCH domain-containing protein 15 homolog (373 aa).

The interval 1–27 (MPPKQAQSKKTVEKEKKKKVEDKTFGL) is disordered. Positions 10 to 25 (KTVEKEKKKKVEDKTF) are enriched in basic and acidic residues. C3H1-type zinc fingers lie at residues 95-123 (DPKS…HDLA) and 167-205 (KPTA…HCLP). Positions 252–326 (KEEKRLQKEK…ALANQINTSL (75 aa)) form a coiled coil. Residues 325 to 373 (SLFTDGGVLPSDDDDDDDDDDDDDEDGDDEEEDDDEEEGEYEEEEASDE) form a disordered region. Acidic residues predominate over residues 335–373 (SDDDDDDDDDDDDDEDGDDEEEDDDEEEGEYEEEEASDE).

The protein belongs to the ZC3H15/TMA46 family.

This is Zinc finger CCCH domain-containing protein 15 homolog from Dictyostelium discoideum (Social amoeba).